We begin with the raw amino-acid sequence, 400 residues long: MGCDVSRPQRITVLGATGSIGLSTLDVIARHPDRYQAFALTGYSRIDELLALCVRHRPAFAVVPSTEAAVRLRAGLAAAGCTTEVLEGEAGLCQVASAAEVDAVMAAIVGAAGLRPTLAAVEAGKKVLLANKEALVMSGALFMEAVRQKGAVLLPIDSEHNAIFQCMPGDYARGLSAVGVRRILLTASGGPFRETPVEALLDVTPEQACAHPNWSMGRKISVDSASMMNKGLELIEACWLFDAVPSKVEVVVHPQSVIHSLVDYVDGSVLAQLGNPDMRTPIANALAWPERIDSGVAPLDLFAIARLDFQAPDEQRFPCLRLARQAAEAGNSAPAVLNAANEVAVEAFLERRIRFPEIAGMIEQVLDQEPVVPLPSLDAVFAADQRARELSREWLRRHGR.

5 residues coordinate NADPH: Thr17, Gly18, Ser19, Ile20, and Asn131. Lys132 contributes to the 1-deoxy-D-xylulose 5-phosphate binding site. Glu133 is an NADPH binding site. Asp157 lines the Mn(2+) pocket. 1-deoxy-D-xylulose 5-phosphate is bound by residues Ser158, Glu159, Ser188, and His211. Glu159 serves as a coordination point for Mn(2+). Residue Gly217 participates in NADPH binding. The 1-deoxy-D-xylulose 5-phosphate site is built by Ser224, Asn229, Lys230, and Glu233. Glu233 contributes to the Mn(2+) binding site.

This sequence belongs to the DXR family. Mg(2+) serves as cofactor. The cofactor is Mn(2+).

The catalysed reaction is 2-C-methyl-D-erythritol 4-phosphate + NADP(+) = 1-deoxy-D-xylulose 5-phosphate + NADPH + H(+). The protein operates within isoprenoid biosynthesis; isopentenyl diphosphate biosynthesis via DXP pathway; isopentenyl diphosphate from 1-deoxy-D-xylulose 5-phosphate: step 1/6. Catalyzes the NADPH-dependent rearrangement and reduction of 1-deoxy-D-xylulose-5-phosphate (DXP) to 2-C-methyl-D-erythritol 4-phosphate (MEP). The polypeptide is 1-deoxy-D-xylulose 5-phosphate reductoisomerase (Pseudomonas putida (strain ATCC 700007 / DSM 6899 / JCM 31910 / BCRC 17059 / LMG 24140 / F1)).